The sequence spans 424 residues: Riboflavin biosynthesis protein RibBA (424 aa).

Positions 1–204 (MTRFDSIERA…IADLIAWRRK (204 aa)) are DHBP synthase. D-ribulose 5-phosphate contacts are provided by residues 28–29 (RE), Asp33, 141–145 (RPGHT), and Glu165. Glu29 lines the Mg(2+) pocket. His144 is a binding site for Mg(2+). The segment at 205–424 (HEKHVLRIAE…QNTAQPGTAL (220 aa)) is GTP cyclohydrolase II. 259 to 263 (RVHSE) lines the GTP pocket. Zn(2+)-binding residues include Cys264, Cys275, and Cys277. Residues Gln280, 303-305 (EGR), and Thr325 contribute to the GTP site. The Proton acceptor; for GTP cyclohydrolase activity role is filled by Asp337. Residue Arg339 is the Nucleophile; for GTP cyclohydrolase activity of the active site. Residues Thr360 and Lys365 each contribute to the GTP site.

This sequence in the N-terminal section; belongs to the DHBP synthase family. The protein in the C-terminal section; belongs to the GTP cyclohydrolase II family. It depends on Mg(2+) as a cofactor. The cofactor is Mn(2+). Zn(2+) is required as a cofactor.

The catalysed reaction is D-ribulose 5-phosphate = (2S)-2-hydroxy-3-oxobutyl phosphate + formate + H(+). It catalyses the reaction GTP + 4 H2O = 2,5-diamino-6-hydroxy-4-(5-phosphoribosylamino)-pyrimidine + formate + 2 phosphate + 3 H(+). Its pathway is cofactor biosynthesis; riboflavin biosynthesis; 2-hydroxy-3-oxobutyl phosphate from D-ribulose 5-phosphate: step 1/1. The protein operates within cofactor biosynthesis; riboflavin biosynthesis; 5-amino-6-(D-ribitylamino)uracil from GTP: step 1/4. Catalyzes the conversion of D-ribulose 5-phosphate to formate and 3,4-dihydroxy-2-butanone 4-phosphate. In terms of biological role, catalyzes the conversion of GTP to 2,5-diamino-6-ribosylamino-4(3H)-pyrimidinone 5'-phosphate (DARP), formate and pyrophosphate. This chain is Riboflavin biosynthesis protein RibBA, found in Rhodococcus erythropolis (strain PR4 / NBRC 100887).